Consider the following 127-residue polypeptide: Aspartate 1-decarboxylase (127 aa).

The active-site Schiff-base intermediate with substrate; via pyruvic acid is the serine 25. Position 25 is a pyruvic acid (Ser) (serine 25). A substrate-binding site is contributed by threonine 57. Tyrosine 58 acts as the Proton donor in catalysis. Residue 73-75 (GAA) participates in substrate binding.

The protein belongs to the PanD family. In terms of assembly, heterooctamer of four alpha and four beta subunits. It depends on pyruvate as a cofactor. Is synthesized initially as an inactive proenzyme, which is activated by self-cleavage at a specific serine bond to produce a beta-subunit with a hydroxyl group at its C-terminus and an alpha-subunit with a pyruvoyl group at its N-terminus.

The protein localises to the cytoplasm. The catalysed reaction is L-aspartate + H(+) = beta-alanine + CO2. It participates in cofactor biosynthesis; (R)-pantothenate biosynthesis; beta-alanine from L-aspartate: step 1/1. Catalyzes the pyruvoyl-dependent decarboxylation of aspartate to produce beta-alanine. The chain is Aspartate 1-decarboxylase from Listeria welshimeri serovar 6b (strain ATCC 35897 / DSM 20650 / CCUG 15529 / CIP 8149 / NCTC 11857 / SLCC 5334 / V8).